Here is a 382-residue protein sequence, read N- to C-terminus: Gap junction alpha-1 protein (382 aa).

Residues 2–23 (GDWSALGKLLDKVQAYSTAGGK) lie on the Cytoplasmic side of the membrane. Position 5 is a phosphoserine (Ser5). A helical membrane pass occupies residues 24-44 (VWLSVLFIFRILLLGTAVESA). Over 45–76 (WGDEQSAFRCNTQQPGCENVCYDKSFPISHVR) the chain is Extracellular. 2 cysteine pairs are disulfide-bonded: Cys54–Cys192 and Cys187–Cys198. The helical transmembrane segment at 77 to 97 (FWVLQIIFVSVPTLLYLAHVF) threads the bilayer. Residues 98-155 (YVMRKEEKLNKKEEELKVAQTDGVNVEMHLKQIEIKKFKYGIEEHGKVKMRGGLLRTY) lie on the Cytoplasmic side of the membrane. Residue Lys144 forms a Glycyl lysine isopeptide (Lys-Gly) (interchain with G-Cter in SUMO) linkage. The helical transmembrane segment at 156-176 (IISILFKSVFEVAFLLIQWYI) threads the bilayer. Residues 177 to 207 (YGFSLSAVYTCKRDPCPHQVDCFLSRPTEKT) are Extracellular-facing. A helical transmembrane segment spans residues 208–228 (IFIIFMLVVSLVSLALNIIEL). The Cytoplasmic segment spans residues 229 to 382 (FYAFFKGVKD…SRPRPDDLEI (154 aa)). Lys237 participates in a covalent cross-link: Glycyl lysine isopeptide (Lys-Gly) (interchain with G-Cter in SUMO). The segment at 244-382 (SDPYHATTGP…SRPRPDDLEI (139 aa)) is interaction with NOV. At Tyr247 the chain carries Phosphotyrosine. Residues Ser255, Ser257, and Ser262 each carry the phosphoserine modification. An interaction with UBQLN4 region spans residues 264-382 (KYAYFNGCSS…SRPRPDDLEI (119 aa)). Cys271 carries the post-translational modification S-nitrosocysteine. Thr275 is modified (phosphothreonine). Ser306 and Ser314 each carry phosphoserine. Positions 317–332 (QNRMGQAGSTISNSHA) are enriched in polar residues. The tract at residues 317–382 (QNRMGQAGST…SRPRPDDLEI (66 aa)) is disordered. A Phosphoserine; by CK1 modification is found at Ser325. At Thr326 the chain carries Phosphothreonine. Phosphoserine; by CK1 occurs at positions 328 and 330. A compositionally biased stretch (basic and acidic residues) spans 342 to 351 (QNSKKLDAGH). Residues Ser344 and Ser365 each carry the phosphoserine modification. Positions 362 to 374 (RPSSRASSRASSR) are enriched in low complexity. Ser368 is subject to Phosphoserine; by PKC/PRKCG and PKC/PRKCD. Residues Ser369 and Ser373 each carry the phosphoserine modification.

This sequence belongs to the connexin family. Alpha-type (group II) subfamily. In terms of assembly, a connexon is composed of a hexamer of connexins. Interacts with SGSM3. Interacts with RIC1/CIP150. Interacts with CNST and CSNK1D. Interacts (via C-terminus) with TJP1. Interacts (via C-terminus) with SRC (via SH3 domain). Interacts (not ubiquitinated) with UBQLN4 (via UBA domain). Interacts with NOV. Interacts with TMEM65. Interacts with ANK3/ANKG and PKP2. Post-translationally, phosphorylation at Ser-325, Ser-328 and Ser-330 by CK1 modulates gap junction assembly. Phosphorylated at Ser-368 by PRKCG; phosphorylation induces disassembly of gap junction plaques and inhibition of gap junction activity. Phosphorylation at Ser-368 by PRKCD triggers its internalization into small vesicles leading to proteasome-mediated degradation. In terms of processing, sumoylated with SUMO1, SUMO2 and SUMO3, which may regulate the level of functional Cx43 gap junctions at the plasma membrane. May be desumoylated by SENP1 or SENP2. S-nitrosylation at Cys-271 is enriched at the muscle endothelial gap junction in arteries, it augments channel permeability and may regulate of smooth muscle cell to endothelial cell communication. Post-translationally, acetylated in the developing cortex; leading to delocalization from the cell membrane.

The protein resides in the cell membrane. It is found in the cell junction. The protein localises to the gap junction. It localises to the endoplasmic reticulum. Functionally, gap junction protein that acts as a regulator of bladder capacity. A gap junction consists of a cluster of closely packed pairs of transmembrane channels, the connexons, through which materials of low MW diffuse from one cell to a neighboring cell. May play a critical role in the physiology of hearing by participating in the recycling of potassium to the cochlear endolymph. Negative regulator of bladder functional capacity: acts by enhancing intercellular electrical and chemical transmission, thus sensitizing bladder muscles to cholinergic neural stimuli and causing them to contract. May play a role in cell growth inhibition through the regulation of NOV expression and localization. Plays an essential role in gap junction communication in the ventricles. The protein is Gap junction alpha-1 protein (GJA1) of Sus scrofa (Pig).